A 123-amino-acid chain; its full sequence is Large ribosomal subunit protein bL20 (123 aa).

Belongs to the bacterial ribosomal protein bL20 family.

Binds directly to 23S ribosomal RNA and is necessary for the in vitro assembly process of the 50S ribosomal subunit. It is not involved in the protein synthesizing functions of that subunit. This is Large ribosomal subunit protein bL20 (rplT) from Chlamydia muridarum (strain MoPn / Nigg).